We begin with the raw amino-acid sequence, 1210 residues long: Epidermal growth factor receptor (1210 aa).

Residues M1–A24 form the signal peptide. The Extracellular portion of the chain corresponds to L25 to S645. The cysteines at positions 31 and 58 are disulfide-linked. Residues D75–V300 form an Approximate repeat. N-linked (GlcNAc...) asparagine glycosylation is found at N128, N175, and N196. Disulfide bonds link C157–C187, C190–C199, C194–C207, C215–C223, C219–C231, C232–C240, C236–C248, C251–C260, C264–C291, C295–C307, C311–C326, C329–C333, and C337–C362. S229 bears the Phosphoserine mark. N352, N361, N413, and N444 each carry an N-linked (GlcNAc...) asparagine glycan. One copy of the Approximate repeat lies at Q390–M600. 11 disulfide bridges follow: C470-C499, C506-C515, C510-C523, C526-C535, C539-C555, C558-C571, C562-C579, C582-C591, C595-C617, C620-C628, and C624-C636. Residue N528 is glycosylated (N-linked (GlcNAc...) asparagine). An N-linked (GlcNAc...) asparagine glycan is attached at N568. N-linked (GlcNAc...) asparagine glycosylation is present at N603. A helical transmembrane segment spans residues I646 to M668. The Cytoplasmic segment spans residues R669–A1210. Residue T678 is modified to Phosphothreonine; by PKC and PKD/PRKD1. The important for dimerization, phosphorylation and activation stretch occupies residues L688–L704. The residue at position 693 (T693) is a Phosphothreonine; by PKD/PRKD1. S695 carries the phosphoserine modification. Residues F712 to L979 enclose the Protein kinase domain. K716 is covalently cross-linked (Glycyl lysine isopeptide (Lys-Gly) (interchain with G-Cter in ubiquitin)). L718–V726 contributes to the ATP binding site. A Glycyl lysine isopeptide (Lys-Gly) (interchain with G-Cter in ubiquitin) cross-link involves residue K737. K745 provides a ligand contact to ATP. The residue at position 745 (K745) is an N6-(2-hydroxyisobutyryl)lysine. Glycyl lysine isopeptide (Lys-Gly) (interchain with G-Cter in ubiquitin) cross-links involve residues K754 and K757. T790–Q791 contacts ATP. Residue D837 is the Proton acceptor of the active site. D855 serves as a coordination point for ATP. K867 is covalently cross-linked (Glycyl lysine isopeptide (Lys-Gly) (interchain with G-Cter in ubiquitin)). Y869 is modified (phosphotyrosine). Residues K929, K960, and K970 each participate in a glycyl lysine isopeptide (Lys-Gly) (interchain with G-Cter in ubiquitin) cross-link. A phosphoserine mark is found at S991 and S995. Phosphotyrosine; by autocatalysis is present on residues Y998 and Y1016. A phosphoserine mark is found at S1026 and S1039. A Phosphothreonine modification is found at T1041. The residue at position 1042 (S1042) is a Phosphoserine. Residue C1049 is the site of S-palmitoyl cysteine attachment. S1064 is subject to Phosphoserine. Residue Y1069 is modified to Phosphotyrosine. S1070, S1071, and S1081 each carry phosphoserine. Phosphotyrosine; by autocatalysis is present on residues Y1092 and Y1110. The interval V1097 to E1137 is disordered. 2 stretches are compositionally biased toward polar residues: residues S1104–L1115 and P1128–E1137. C1146 carries the S-palmitoyl cysteine lipid modification. S1166 carries the phosphoserine modification. Phosphotyrosine; by autocatalysis is present on residues Y1172 and Y1197. R1199 is modified (omega-N-methylarginine).

It belongs to the protein kinase superfamily. Tyr protein kinase family. EGF receptor subfamily. As to quaternary structure, binding of the ligand triggers homo- and/or heterodimerization of the receptor triggering its autophosphorylation. Heterodimer with ERBB2. Forms a complex with CCDC88A/GIV (via SH2-like regions) and GNAI3 which leads to enhanced EGFR signaling and triggering of cell migration; binding to CCDC88A requires autophosphorylation of the EGFR C-terminal region, and ligand stimulation is required for recruitment of GNAI3 to the complex. Interacts with ERRFI1; inhibits dimerization of the kinase domain and autophosphorylation. Part of a complex with ERBB2 and either PIK3C2A or PIK3C2B. Interacts with GRB2; an adapter protein coupling the receptor to downstream signaling pathways. Interacts with GAB2; involved in signaling downstream of EGFR. Interacts with STAT3; mediates EGFR downstream signaling in cell proliferation. Interacts with RIPK1; involved in NF-kappa-B activation. Interacts (autophosphorylated) with CBL, CBLB and CBLC; involved in EGFR ubiquitination and regulation; interaction with CBL is reduced in the presence of tensin TNS4. Interacts with SOCS5; regulates EGFR degradation through ELOC- and ELOB-mediated ubiquitination and proteasomal degradation. Interacts with PRMT5; methylates EGFR and enhances interaction with PTPN6. Interacts (phosphorylated) with PTPN6; inhibits EGFR-dependent activation of MAPK/ERK. Interacts with COPG1; essential for regulation of EGF-dependent nuclear transport of EGFR by retrograde trafficking from the Golgi to the ER. Interacts with TNK2; this interaction is dependent on EGF stimulation and kinase activity of EGFR. Interacts with PCNA; positively regulates PCNA. Interacts with PELP1. Interacts with MUC1. Interacts with AP2M1. Interacts with FER. May interact with EPS8; mediates EPS8 phosphorylation. Interacts (via SH2 domains) with GRB2, NCK1 and NCK2. Interacts with ATXN2. Interacts with GAREM1. Interacts (ubiquitinated) with ANKRD13A/B/D; the interaction is direct and may regulate EGFR internalization after EGF stimulation. Interacts with GPER1; the interaction occurs in an estrogen-dependent manner. Interacts (via C-terminal cytoplasmic kinase domain) with ZPR1 (via zinc fingers). Interacts with RNF115 and RNF126. Interacts with GPRC5A (via its transmembrane domain). Interacts with FAM83B; positively regulates EGFR inducing its autophosphorylation in absence of stimulation by EGF. Interacts with LAPTM4B; positively correlates with EGFR activation. Interacts with STX19. Interacts with CD44. Interacts with PGRMC1; the interaction requires PGRMC1 homodimerization. Interacts with PIKFYVE. Interacts with NEU3. Interacts with TRAF4. Interacts with the ant venom OMEGA-myrmeciitoxin(02)-Mg1a. Interacts with CD82; this interaction facilitates ligand-induced endocytosis of the receptor and its subsequent desensitization. Phosphorylated on Tyr residues in response to EGF. Phosphorylation at Ser-695 is partial and occurs only if Thr-693 is phosphorylated. Phosphorylation at Thr-678 and Thr-693 by PRKD1 inhibits EGF-induced MAPK8/JNK1 activation. Dephosphorylation by PTPRJ prevents endocytosis and stabilizes the receptor at the plasma membrane. Autophosphorylation at Tyr-1197 is stimulated by methylation at Arg-1199 and enhances interaction with PTPN6. Autophosphorylation at Tyr-1092 and/or Tyr-1110 recruits STAT3. Dephosphorylated by PTPN1 and PTPN2. Post-translationally, monoubiquitinated and polyubiquitinated upon EGF stimulation; which does not affect tyrosine kinase activity or signaling capacity but may play a role in lysosomal targeting. Polyubiquitin linkage is mainly through 'Lys-63', but linkage through 'Lys-48', 'Lys-11' and 'Lys-29' also occurs. Deubiquitination by OTUD7B prevents degradation. Ubiquitinated by RNF115 and RNF126. Ubiquitinated by ZNRF1 or CBL at different lysines in response to EGF stimulation; leading to recruitment of the ESCRT machinery and subsequent degradation in the lysosomes. Deubiquitinated by UCHL1 leading to the inhibition of its degradation. In terms of processing, palmitoylated on Cys residues by ZDHHC20. Palmitoylation inhibits internalization after ligand binding, and increases the persistence of tyrosine-phosphorylated EGFR at the cell membrane. Palmitoylation increases the amplitude and duration of EGFR signaling. Methylated. Methylation at Arg-1199 by PRMT5 stimulates phosphorylation at Tyr-1197. In terms of tissue distribution, hypothalamus.

Its subcellular location is the cell membrane. The protein resides in the endoplasmic reticulum membrane. The protein localises to the golgi apparatus membrane. It is found in the nucleus membrane. It localises to the endosome. Its subcellular location is the endosome membrane. The protein resides in the nucleus. It carries out the reaction L-tyrosyl-[protein] + ATP = O-phospho-L-tyrosyl-[protein] + ADP + H(+). Endocytosis and inhibition of the activated EGFR by phosphatases like PTPRJ and PTPRK constitute immediate regulatory mechanisms. Upon EGF-binding phosphorylates EPS15 that regulates EGFR endocytosis and activity. Moreover, inducible feedback inhibitors including LRIG1, SOCS4, SOCS5 and ERRFI1 constitute alternative regulatory mechanisms for the EGFR signaling. Its function is as follows. Receptor tyrosine kinase binding ligands of the EGF family and activating several signaling cascades to convert extracellular cues into appropriate cellular responses. Known ligands include EGF, TGFA/TGF-alpha, AREG, epigen/EPGN, BTC/betacellulin, epiregulin/EREG and HBEGF/heparin-binding EGF. Ligand binding triggers receptor homo- and/or heterodimerization and autophosphorylation on key cytoplasmic residues. The phosphorylated receptor recruits adapter proteins like GRB2 which in turn activates complex downstream signaling cascades. Activates at least 4 major downstream signaling cascades including the RAS-RAF-MEK-ERK, PI3 kinase-AKT, PLCgamma-PKC and STATs modules. May also activate the NF-kappa-B signaling cascade. Also directly phosphorylates other proteins like RGS16, activating its GTPase activity and probably coupling the EGF receptor signaling to the G protein-coupled receptor signaling. Also phosphorylates MUC1 and increases its interaction with SRC and CTNNB1/beta-catenin. Positively regulates cell migration via interaction with CCDC88A/GIV which retains EGFR at the cell membrane following ligand stimulation, promoting EGFR signaling which triggers cell migration. Plays a role in enhancing learning and memory performance. Plays a role in mammalian pain signaling (long-lasting hypersensitivity). The polypeptide is Epidermal growth factor receptor (EGFR) (Macaca mulatta (Rhesus macaque)).